A 409-amino-acid polypeptide reads, in one-letter code: Palmitoyltransferase ZDHHC23 (409 aa).

Over M1–K87 the chain is Cytoplasmic. The helical transmembrane segment at V88–A106 threads the bilayer. Residues S107–H109 lie on the Lumenal side of the membrane. The helical transmembrane segment at F110–H132 threads the bilayer. Residues R133–E136 are Cytoplasmic-facing. Residues Q137–L157 traverse the membrane as a helical segment. Residues Q158–R165 are Lumenal-facing. The helical transmembrane segment at V166–H186 threads the bilayer. Topologically, residues R187–Q302 are cytoplasmic. The interval R215–K255 is disordered. Residues D259–L309 form the DHHC domain. C289 serves as the catalytic S-palmitoyl cysteine intermediate. Residues A303–L323 form a helical membrane-spanning segment. At D324–S331 the chain is on the lumenal side. The helical transmembrane segment at V332–F352 threads the bilayer. T353 is a topological domain (cytoplasmic). A helical membrane pass occupies residues C354 to I374. At N375–G409 the chain is on the lumenal side.

The protein belongs to the DHHC palmitoyltransferase family. As to quaternary structure, interacts with NOS1.

It is found in the golgi apparatus membrane. Its subcellular location is the golgi apparatus. The protein resides in the trans-Golgi network membrane. The enzyme catalyses L-cysteinyl-[protein] + hexadecanoyl-CoA = S-hexadecanoyl-L-cysteinyl-[protein] + CoA. Its function is as follows. Palmitoyltransferase that could catalyze the addition of palmitate onto various protein substrates and be involved in a variety of cellular processes. Palmitoyltransferase that mediates palmitoylation of KCNMA1, regulating localization of KCNMA1 to the plasma membrane. May be involved in NOS1 regulation and targeting to the synaptic membrane. In Homo sapiens (Human), this protein is Palmitoyltransferase ZDHHC23.